Here is a 305-residue protein sequence, read N- to C-terminus: Nitrogen assimilation regulatory protein nac (305 aa).

Residues 1 to 58 enclose the HTH lysR-type domain; the sequence is MNLRRLKYFVKIVDIGSLTQAAEVLHIAQPALSQQVATLEGEMDQQLLIRTKRGVTPT. Positions 18 to 37 form a DNA-binding region, H-T-H motif; that stretch reads LTQAAEVLHIAQPALSQQVA.

It belongs to the LysR transcriptional regulatory family.

Functionally, transcriptional activator for the hut, put and ure operons and repressor for the gdh and gltB operons in response to nitrogen limitation. Negative regulator of its own expression. This is Nitrogen assimilation regulatory protein nac (nac) from Klebsiella aerogenes (Enterobacter aerogenes).